The following is a 118-amino-acid chain: Small ribosomal subunit protein uS13 (118 aa).

The tract at residues 93-118 is disordered; sequence RSLPVRGQRSKTNARTRKGPRKPIKK.

Belongs to the universal ribosomal protein uS13 family. As to quaternary structure, part of the 30S ribosomal subunit. Forms a loose heterodimer with protein S19. Forms two bridges to the 50S subunit in the 70S ribosome.

Its function is as follows. Located at the top of the head of the 30S subunit, it contacts several helices of the 16S rRNA. In the 70S ribosome it contacts the 23S rRNA (bridge B1a) and protein L5 of the 50S subunit (bridge B1b), connecting the 2 subunits; these bridges are implicated in subunit movement. Contacts the tRNAs in the A and P-sites. The polypeptide is Small ribosomal subunit protein uS13 (Teredinibacter turnerae (strain ATCC 39867 / T7901)).